The primary structure comprises 747 residues: Probable copper-transporting ATPase PacS (747 aa).

Over 1–101 (MVNQQTLTLR…RQLAQRVWVS (101 aa)) the chain is Cytoplasmic. Residues 3–69 (NQQTLTLRGM…AIEAAGYHAF (67 aa)) enclose the HMA domain. Residues C14 and C17 each coordinate a metal cation. A helical membrane pass occupies residues 102 to 122 (GLIASLLVIGSLPMMLGISIP). The Extracellular portion of the chain corresponds to 123 to 132 (GIPMWLHHPG). Residues 133–151 (LQLGLTLPVLWAGRSFFIN) form a helical membrane-spanning segment. Topologically, residues 152–158 (AWKAFRQ) are cytoplasmic. The helical transmembrane segment at 159–179 (NTATMDTLVAVGTGAAFLYSL) threads the bilayer. Residues 180–199 (AVTLFPQWLTRQGLPPDVYY) lie on the Extracellular side of the membrane. The helical transmembrane segment at 200-220 (EAIAVIIALLLLGRSLEERAK) threads the bilayer. The Cytoplasmic portion of the chain corresponds to 221-348 (GQTSAAIRQL…KAPIQRLADQ (128 aa)). Residues 349 to 371 (VTGWFVPAVIAIAILTFVLWFNW) traverse the membrane as a helical segment. Residues 372–378 (IGNVTLA) are Extracellular-facing. Residues 379-396 (LITAVGVLIIACPCALGL) form a helical membrane-spanning segment. The Cytoplasmic segment spans residues 397–688 (ATPTSIMVGT…QLSRATMTNI (292 aa)). D434 serves as the catalytic 4-aspartylphosphate intermediate. Mg(2+)-binding residues include D634 and D638. The helical transmembrane segment at 689–708 (RQNLFFAFIYNVAGIPIAAG) threads the bilayer. The Extracellular portion of the chain corresponds to 709-720 (ILYPLLGWLLSP). Residues 721-739 (MLAGAAMAFSSVSVVTNAL) form a helical membrane-spanning segment. The Cytoplasmic segment spans residues 740-747 (RLRQFQPR).

It belongs to the cation transport ATPase (P-type) (TC 3.A.3) family. Type IB subfamily.

It is found in the cell membrane. The enzyme catalyses Cu(+)(in) + ATP + H2O = Cu(+)(out) + ADP + phosphate + H(+). Functionally, may play a role in the osmotic adaptation. This is Probable copper-transporting ATPase PacS (pacS) from Synechococcus elongatus (strain ATCC 33912 / PCC 7942 / FACHB-805) (Anacystis nidulans R2).